A 614-amino-acid polypeptide reads, in one-letter code: MSNLKKISDEDRESKFGYVFAVSGPVVTAERMSGSAMYELVRVGYYELVGEIIRLEGDMATIQVYEETSGVTVGDPVLRTGKPLSVELGPGIMGSIFDGIQRPLKDINEMTSSIYIPKGINVPCLSRTQSWSFNPLNVKAGSHITGGDLYGIVHENTLVKHKLMVPPRAKGTVKYIAPSGNYTVDDVILETEFDGEISKFTMLQVWPVRQPRPVTEKLPANHPLLTGQRVLDSLFPCVQGGTTAIPGAFGCGKTVISQSLSKYSNSDVIVYVGCGERGNEMSEVLRDFPELSVEIDGVTESIMKRTALVANTSNMPVAAREASIYTGITLSEYFRDMGYNVSMMADSTSRWAEALREISGRLAEMPADSGYPAYLGARLASFYERAGRVKCLGNPEREGSVSIVGAVSPPGGDFSDPVTSATLGIVQVFWGLDKKLAQRKHFPSINWLISYSKYMRALEDFYDKNFPEFVPMRTKVKEILQEEEDLSEIVQLVGKASLAETDKITLEVAKLLKDDFLQQNSYSAYDRFCPFYKTVGMLKNMIGFYDMARHAVETTAQSENKITWNVIRDSMGQILYQLSSMKFKDPVKDGEPKIKADFDQLYEDMQQAFRNLED.

Residue 247 to 254 (GAFGCGKT) participates in ATP binding.

Belongs to the ATPase alpha/beta chains family. As to quaternary structure, V-ATPase is a heteromultimeric enzyme made up of two complexes: the ATP-hydrolytic V1 complex and the proton translocation V0 complex. The V1 complex consists of three catalytic AB heterodimers that form a heterohexamer, three peripheral stalks each consisting of EG heterodimers, one central rotor including subunits D and F, and the regulatory subunits C and H. The proton translocation complex V0 consists of the proton transport subunit a, a ring of proteolipid subunits c9c'', rotary subunit d, subunits e and f, and the accessory subunits VhaAC45 and ATP6AP2.

The enzyme catalyses ATP + H2O + 4 H(+)(in) = ADP + phosphate + 5 H(+)(out). With respect to regulation, ATP hydrolysis occurs at the interface between the nucleotide-binding domains of subunits A and B. ATP hydrolysis triggers a conformational change in the subunits D and F, which induces a shift of subunit d. The c-ring is subsequently rotated and results in a continuous proton translocation across the membrane. Its function is as follows. Catalytic subunit of the V1 complex of vacuolar(H+)-ATPase (V-ATPase), a multisubunit enzyme composed of a peripheral complex (V1) that hydrolyzes ATP and a membrane integral complex (V0) that translocates protons. V-ATPase is responsible for acidifying and maintaining the pH of intracellular compartments and in some cell types, is targeted to the plasma membrane, where it is responsible for acidifying the extracellular environment. The sequence is that of V-type proton ATPase catalytic subunit A from Anopheles gambiae (African malaria mosquito).